The primary structure comprises 279 residues: 2'-N-acetylparomamine deacetylase (279 aa).

Zn(2+) is bound by residues histidine 31, aspartate 34, and histidine 157. Residues 245–279 form a disordered region; the sequence is PRRWTGGTAGAGHAAGRRGAPHTERVWTPAPAGAR. Low complexity predominate over residues 246–258; it reads RRWTGGTAGAGHA.

The protein belongs to the PIGL family. Zn(2+) is required as a cofactor.

It carries out the reaction 2'-N-acetylparomamine + H2O = paromamine + acetate. The enzyme catalyses 2'''-acetyl-6'''-hydroxyneomycin C + H2O = 6'''-deamino-6'''-hydroxyneomycin C + acetate. Its pathway is antibiotic biosynthesis; neomycin biosynthesis. Deacetylase involved in the biosynthesis of neomycin by mediating 2 steps of the pathway. Deacetylates both 2'-N-acetylparomamine and 2'''-acetyl-6'''-hydroxyneomycin C. In Streptomyces fradiae (Streptomyces roseoflavus), this protein is 2'-N-acetylparomamine deacetylase (neoL).